Here is a 323-residue protein sequence, read N- to C-terminus: Octaprenyl diphosphate synthase (323 aa).

Residues Lys-45, Arg-48, and His-77 each contribute to the isopentenyl diphosphate site. Residues Asp-84 and Asp-88 each coordinate Mg(2+). Residue Arg-93 participates in an all-trans-polyprenyl diphosphate binding. An isopentenyl diphosphate-binding site is contributed by Arg-94. Positions 170, 171, and 208 each coordinate an all-trans-polyprenyl diphosphate.

The protein belongs to the FPP/GGPP synthase family. Mg(2+) is required as a cofactor.

It catalyses the reaction 5 isopentenyl diphosphate + (2E,6E)-farnesyl diphosphate = all-trans-octaprenyl diphosphate + 5 diphosphate. In terms of biological role, supplies octaprenyl diphosphate, the precursor for the side chain of the isoprenoid quinones ubiquinone and menaquinone. The sequence is that of Octaprenyl diphosphate synthase (ispB) from Escherichia coli (strain K12).